Consider the following 1165-residue polypeptide: DNA-directed RNA polymerase subunit beta' (1165 aa).

Zn(2+)-binding residues include cysteine 60, cysteine 62, cysteine 75, and cysteine 78. Mg(2+)-binding residues include aspartate 449, aspartate 451, and aspartate 453. The Zn(2+) site is built by cysteine 794, cysteine 868, cysteine 875, and cysteine 878.

It belongs to the RNA polymerase beta' chain family. In terms of assembly, the RNAP catalytic core consists of 2 alpha, 1 beta, 1 beta' and 1 omega subunit. When a sigma factor is associated with the core the holoenzyme is formed, which can initiate transcription. It depends on Mg(2+) as a cofactor. Zn(2+) is required as a cofactor.

The catalysed reaction is RNA(n) + a ribonucleoside 5'-triphosphate = RNA(n+1) + diphosphate. In terms of biological role, DNA-dependent RNA polymerase catalyzes the transcription of DNA into RNA using the four ribonucleoside triphosphates as substrates. This is DNA-directed RNA polymerase subunit beta' from Acetivibrio thermocellus (strain ATCC 27405 / DSM 1237 / JCM 9322 / NBRC 103400 / NCIMB 10682 / NRRL B-4536 / VPI 7372) (Clostridium thermocellum).